The sequence spans 115 residues: Putative HNH nuclease YajD (115 aa).

Residues 27 to 75 form the HNH domain; sequence CGRCSREFVYSNLRELTVHHIDHDHTNNPEDGSNWELLCLYCHDHEHSK.

This sequence belongs to the HNH nuclease family.

The polypeptide is Putative HNH nuclease YajD (yajD) (Salmonella typhi).